Consider the following 345-residue polypeptide: Phosphate acyltransferase (345 aa).

This sequence belongs to the PlsX family. Homodimer. Probably interacts with PlsY.

It localises to the cytoplasm. The catalysed reaction is a fatty acyl-[ACP] + phosphate = an acyl phosphate + holo-[ACP]. It participates in lipid metabolism; phospholipid metabolism. Its function is as follows. Catalyzes the reversible formation of acyl-phosphate (acyl-PO(4)) from acyl-[acyl-carrier-protein] (acyl-ACP). This enzyme utilizes acyl-ACP as fatty acyl donor, but not acyl-CoA. This Nitratidesulfovibrio vulgaris (strain ATCC 29579 / DSM 644 / CCUG 34227 / NCIMB 8303 / VKM B-1760 / Hildenborough) (Desulfovibrio vulgaris) protein is Phosphate acyltransferase.